A 310-amino-acid polypeptide reads, in one-letter code: Ribosomal RNA small subunit methyltransferase H (310 aa).

S-adenosyl-L-methionine-binding positions include 47-49 (GGH), aspartate 66, phenylalanine 93, aspartate 108, and glutamine 115. Residues 275-310 (RKPFMASEQEQADNPRSRSAKLRIARRRPDTARSGP) form a disordered region. Residues 301-310 (RRPDTARSGP) show a composition bias toward basic and acidic residues.

This sequence belongs to the methyltransferase superfamily. RsmH family.

It localises to the cytoplasm. It catalyses the reaction cytidine(1402) in 16S rRNA + S-adenosyl-L-methionine = N(4)-methylcytidine(1402) in 16S rRNA + S-adenosyl-L-homocysteine + H(+). Functionally, specifically methylates the N4 position of cytidine in position 1402 (C1402) of 16S rRNA. In Synechococcus sp. (strain CC9311), this protein is Ribosomal RNA small subunit methyltransferase H.